A 110-amino-acid polypeptide reads, in one-letter code: Large ribosomal subunit protein uL24 (110 aa).

The protein belongs to the universal ribosomal protein uL24 family. In terms of assembly, part of the 50S ribosomal subunit.

Functionally, one of two assembly initiator proteins, it binds directly to the 5'-end of the 23S rRNA, where it nucleates assembly of the 50S subunit. In terms of biological role, one of the proteins that surrounds the polypeptide exit tunnel on the outside of the subunit. The sequence is that of Large ribosomal subunit protein uL24 from Chloroflexus aurantiacus (strain ATCC 29366 / DSM 635 / J-10-fl).